We begin with the raw amino-acid sequence, 540 residues long: E3 ubiquitin-protein ligase rnf8-A (540 aa).

An FHA domain is found at 30-84 (VTLGRGLGVTYQLKPTLCPLMISRTHCLFKQNTGGEWTVTDNKSLNGVWRNKERL). Residues 128–205 (LIRPLPDKTK…SGTESRLNDS (78 aa)) form a disordered region. Composition is skewed to polar residues over residues 152 to 162 (ASGNEGPSNFS) and 179 to 200 (SSHTTDLYKQPTVEPTASGTES). An RING-type zinc finger spans residues 382–420 (CIICSEHFIEAVTLNCAHSFCSYCIKSWKKRKEECPICR). Residues 517 to 540 (GTDELDSSDFESDDDEEEDSFLII) are disordered. The segment covering 519–540 (DELDSSDFESDDDEEEDSFLII) has biased composition (acidic residues).

This sequence belongs to the RNF8 family. In terms of assembly, homodimer. Forms a E2-E3 ubiquitin ligase complex composed of the rnf8 homodimer and a E2 heterodimer of ube2n and ube2v2.

It localises to the nucleus. The enzyme catalyses S-ubiquitinyl-[E2 ubiquitin-conjugating enzyme]-L-cysteine + [acceptor protein]-L-lysine = [E2 ubiquitin-conjugating enzyme]-L-cysteine + N(6)-ubiquitinyl-[acceptor protein]-L-lysine.. It participates in protein modification; protein ubiquitination. Its function is as follows. E3 ubiquitin-protein ligase that plays a key role in DNA damage signaling via 2 distinct roles: by mediating the 'Lys-63'-linked ubiquitination of histones H2A and H2AX and promoting the recruitment of DNA repair proteins at double-strand breaks (DSBs) sites, and by catalyzing 'Lys-48'-linked ubiquitination to remove target proteins from DNA damage sites. Following DNA DSBs, it is recruited to the sites of damage by ATM-phosphorylated mdc1 and catalyzes the 'Lys-63'-linked ubiquitination of histones H2A and H2AX, thereby promoting the formation of tp53bp1 and brca1 ionizing radiation-induced foci (IRIF). H2A ubiquitination also mediates the ATM-dependent transcriptional silencing at regions flanking DSBs in cis, a mechanism to avoid collision between transcription and repair intermediates. Also catalyzes the formation of 'Lys-48'-linked polyubiquitin chains, leading to degradation of substrate proteins. In addition to its function in damage signaling, also plays a role in higher-order chromatin structure by mediating extensive chromatin decondensation. In Xenopus laevis (African clawed frog), this protein is E3 ubiquitin-protein ligase rnf8-A.